Consider the following 355-residue polypeptide: uncharacterized protein (355 aa).

The active-site For GATase activity is Cys-2. A Glutamine amidotransferase type-2 domain is found at 2–248; the sequence is CELLGICFNK…NGELMVFKNG (247 aa).

This is an uncharacterized protein from Methanocaldococcus jannaschii (strain ATCC 43067 / DSM 2661 / JAL-1 / JCM 10045 / NBRC 100440) (Methanococcus jannaschii).